The sequence spans 329 residues: Bile salt hydrolase/transferase (329 aa).

The active-site Nucleophile; acyl-thioester intermediate is Cys2. Residues Cys2 and Arg18 each coordinate deoxycholate. Asn82 is a taurine binding site.

It belongs to the peptidase C59 family. Homotetramer. The tetramer consists of a dimer of dimers.

It catalyses the reaction glycocholate + H2O = cholate + glycine. The catalysed reaction is cholate + taurine = taurocholate + H2O. The enzyme catalyses taurodeoxycholate + H2O = deoxycholate + taurine. It carries out the reaction glycodeoxycholate + H2O = deoxycholate + glycine. It catalyses the reaction chenodeoxycholate + glycine = glycochenodeoxycholate + H2O. The catalysed reaction is taurochenodeoxycholate + H2O = chenodeoxycholate + taurine. The enzyme catalyses an L-alpha-amino acid + cholate = an N-choloyl-L-alpha-amino acid + H2O. It carries out the reaction an L-alpha-amino acid + taurocholate = an N-choloyl-L-alpha-amino acid + taurine. It catalyses the reaction glycocholate + an L-alpha-amino acid = an N-choloyl-L-alpha-amino acid + glycine. The catalysed reaction is cholate + L-histidine = L-histidocholate + H2O. The enzyme catalyses taurocholate + L-histidine = L-histidocholate + taurine. It carries out the reaction glycocholate + L-histidine = L-histidocholate + glycine. It catalyses the reaction cholate + L-arginine = L-arginocholate + H2O. The catalysed reaction is taurocholate + L-arginine = L-arginocholate + taurine. The enzyme catalyses glycocholate + L-arginine = L-arginocholate + glycine. It carries out the reaction cholate + L-phenylalanine = L-phenylalanocholate + H2O. It catalyses the reaction taurocholate + L-phenylalanine = L-phenylalanocholate + taurine. Its pathway is lipid metabolism; bile acid biosynthesis. In terms of biological role, possesses dual functions in bile acid metabolism. Acts as a bile salt hydrolase that catalyzes the deconjugation of glycine- and taurine-linked bile salts, which occurs naturally in the intestines of humans, releasing amino acid residues and deconjugated bile salts (bile acids). Can hydrolyze the amide bond in major human conjugated bile salts, such as glycocholate (GCA), taurocholate (TCA) and taurodeoxycholate (TDCA). Shows a slight preference for taurine-conjugated bile acids as substrates. Also acts as an amine N-acyltransferase that conjugates a wide variety of amino acids to conjugated and non-conjugated bile acids, thus producing bacterial bile acid amidates (BBAAs) - also named microbially conjugated bile acids (MCBAs) - in the gastrointestinal tract. These BBAAs may facilitate communication between the microbiota and host through the activation of human ligand-activated transcription factors. This chain is Bile salt hydrolase/transferase (cbh), found in Clostridium perfringens (strain 13 / Type A).